The sequence spans 437 residues: Sorting nexin-30 (437 aa).

Disordered stretches follow at residues 1 to 44 and 54 to 73; these read MAGG…PDLL and LILP…SSSS. At T38 the chain carries Phosphothreonine. The residue at position 40 (S40) is a Phosphoserine. Positions 63–73 are enriched in low complexity; it reads AGTSSPASSSS. Residues 89–210 enclose the PX domain; the sequence is RDLFVIVDDP…IFLTAKDLNA (122 aa). R132, Q134, K162, and R176 together coordinate a 1,2-diacyl-sn-glycero-3-phospho-(1D-myo-inositol-3-phosphate). The region spanning 234–437 is the BAR domain; the sequence is KLRTRPLEFA…PLLQEKQEAK (204 aa).

It belongs to the sorting nexin family. In terms of assembly, heterodimer; heterodimerizes with SNX4.

It localises to the early endosome membrane. Involved in the regulation of endocytosis and in several stages of intracellular trafficking. Together with SNX4, involved in autophagosome assembly. The chain is Sorting nexin-30 from Homo sapiens (Human).